We begin with the raw amino-acid sequence, 254 residues long: UPF0246 protein FTN_1542 (254 aa).

Belongs to the UPF0246 family.

The protein is UPF0246 protein FTN_1542 of Francisella tularensis subsp. novicida (strain U112).